The following is a 273-amino-acid chain: Vacuolar membrane protein YPL162C (273 aa).

Residues 1–13 lie on the Vacuolar side of the membrane; it reads MYVSNGKDTCQLL. Residues 14 to 34 traverse the membrane as a helical segment; the sequence is GPVSLFVQTLMGMTAVIVLLV. At 35–51 the chain is on the cytoplasmic side; it reads KRNYEHPRRKMIVWSYD. Residues 52-72 form a helical membrane-spanning segment; it reads IGKQIIGSLGIHFLNLGISIL. The Vacuolar portion of the chain corresponds to 73–97; the sequence is KKRRRSLFAITAKGNDDEDQCDWYF. The chain crosses the membrane as a helical span at residues 98 to 118; that stretch reads LNLLLDTTVGIPILWLCLYII. Over 119–156 the chain is Cytoplasmic; sequence EKVLKSLHFQNIESGNYFPSKTVGSHPRKPLFSAFVKQ. Residues 157-177 traverse the membrane as a helical segment; it reads LLIFIVGLGVMKFCVFLILNY. The Vacuolar segment spans residues 178-198; the sequence is LEDLAYWFADLILGWSDSWPN. Residues 199-219 form a helical membrane-spanning segment; sequence FQVFLVMFVFPILLNCFQYFC. At 220–273 the chain is on the cytoplasmic side; the sequence is VDNVIRLHSESLTITNAENFETNTFLNDEIPDLSEVSNEVPNKDNNISSYGSII.

Its subcellular location is the vacuole membrane. This is Vacuolar membrane protein YPL162C from Saccharomyces cerevisiae (strain ATCC 204508 / S288c) (Baker's yeast).